The sequence spans 211 residues: MGQKSNPIGLRLKIVGTWDSLWYANRDYATKLHEDLLLRSFVKKTFHHAAVSKVVIARKVDAVIINIHSARPGVIIGKKGVDIDRIKQKIAKMVNHEVELHIVEVKKPDLKAVLIAENIAQQLEKRVSFRRAMKRGVQNCLKMGAKGVKVSCAGRLGGAEIARTEWYKEGSVPLHTFRANIDYSCVEAKTIYGIVGVKVWVYVGDSRAVVE.

In terms of domain architecture, KH type-2 spans 38–106; that stretch reads LRSFVKKTFH…EVELHIVEVK (69 aa).

It belongs to the universal ribosomal protein uS3 family. Part of the 30S ribosomal subunit. Forms a tight complex with proteins S10 and S14.

In terms of biological role, binds the lower part of the 30S subunit head. Binds mRNA in the 70S ribosome, positioning it for translation. The protein is Small ribosomal subunit protein uS3 of Anaplasma phagocytophilum (strain HZ).